Here is a 216-residue protein sequence, read N- to C-terminus: Octanoyltransferase (216 aa).

Residues 29 to 209 form the BPL/LPL catalytic domain; that stretch reads DRAGECVWLL…SFDAVFGPCP (181 aa). Substrate is bound by residues 68-75, 140-142, and 153-155; these read RGGQYTYH, AIG, and GFA. The active-site Acyl-thioester intermediate is the cysteine 171.

Belongs to the LipB family.

The protein localises to the cytoplasm. The enzyme catalyses octanoyl-[ACP] + L-lysyl-[protein] = N(6)-octanoyl-L-lysyl-[protein] + holo-[ACP] + H(+). It participates in protein modification; protein lipoylation via endogenous pathway; protein N(6)-(lipoyl)lysine from octanoyl-[acyl-carrier-protein]: step 1/2. In terms of biological role, catalyzes the transfer of endogenously produced octanoic acid from octanoyl-acyl-carrier-protein onto the lipoyl domains of lipoate-dependent enzymes. Lipoyl-ACP can also act as a substrate although octanoyl-ACP is likely to be the physiological substrate. The chain is Octanoyltransferase from Rhodospirillum rubrum (strain ATCC 11170 / ATH 1.1.1 / DSM 467 / LMG 4362 / NCIMB 8255 / S1).